We begin with the raw amino-acid sequence, 286 residues long: Bifunctional protein FolD (286 aa).

Residues 165–167 (GRS) and S190 contribute to the NADP(+) site.

It belongs to the tetrahydrofolate dehydrogenase/cyclohydrolase family. Homodimer.

It catalyses the reaction (6R)-5,10-methylene-5,6,7,8-tetrahydrofolate + NADP(+) = (6R)-5,10-methenyltetrahydrofolate + NADPH. The catalysed reaction is (6R)-5,10-methenyltetrahydrofolate + H2O = (6R)-10-formyltetrahydrofolate + H(+). It participates in one-carbon metabolism; tetrahydrofolate interconversion. Its function is as follows. Catalyzes the oxidation of 5,10-methylenetetrahydrofolate to 5,10-methenyltetrahydrofolate and then the hydrolysis of 5,10-methenyltetrahydrofolate to 10-formyltetrahydrofolate. The polypeptide is Bifunctional protein FolD (Burkholderia lata (strain ATCC 17760 / DSM 23089 / LMG 22485 / NCIMB 9086 / R18194 / 383)).